A 376-amino-acid chain; its full sequence is NAD(P)H-quinone oxidoreductase subunit 1, chloroplastic (376 aa).

The next 9 helical transmembrane spans lie at 27–47 (LISI…GVLV), 65–85 (PEYA…KLLI), 97–117 (WLFS…YLVV), 130–150 (LGIF…LIAG), 166–186 (AAQS…ISLL), 251–271 (GIKF…SSLF), 272–292 (AVVL…IFFI), 310–330 (LIIP…FIFF), and 353–373 (FLLP…LTLF).

It belongs to the complex I subunit 1 family. In terms of assembly, NDH is composed of at least 16 different subunits, 5 of which are encoded in the nucleus.

It is found in the plastid. It localises to the chloroplast thylakoid membrane. It carries out the reaction a plastoquinone + NADH + (n+1) H(+)(in) = a plastoquinol + NAD(+) + n H(+)(out). The catalysed reaction is a plastoquinone + NADPH + (n+1) H(+)(in) = a plastoquinol + NADP(+) + n H(+)(out). Its function is as follows. NDH shuttles electrons from NAD(P)H:plastoquinone, via FMN and iron-sulfur (Fe-S) centers, to quinones in the photosynthetic chain and possibly in a chloroplast respiratory chain. The immediate electron acceptor for the enzyme in this species is believed to be plastoquinone. Couples the redox reaction to proton translocation, and thus conserves the redox energy in a proton gradient. In Chara vulgaris (Common stonewort), this protein is NAD(P)H-quinone oxidoreductase subunit 1, chloroplastic.